The following is a 104-amino-acid chain: Phosphoribosyl-ATP pyrophosphatase (104 aa).

This sequence belongs to the PRA-PH family.

It is found in the cytoplasm. The catalysed reaction is 1-(5-phospho-beta-D-ribosyl)-ATP + H2O = 1-(5-phospho-beta-D-ribosyl)-5'-AMP + diphosphate + H(+). It participates in amino-acid biosynthesis; L-histidine biosynthesis; L-histidine from 5-phospho-alpha-D-ribose 1-diphosphate: step 2/9. In Erythrobacter litoralis (strain HTCC2594), this protein is Phosphoribosyl-ATP pyrophosphatase.